Here is a 167-residue protein sequence, read N- to C-terminus: 16S rRNA aminocarboxypropyltransferase (167 aa).

The S-adenosyl-L-methionine site is built by threonine 17, valine 62, leucine 84, tyrosine 99, and serine 103.

This sequence belongs to the TDD superfamily. TSR3 family.

Its subcellular location is the cytoplasm. The enzyme catalyses an N(1)-methylpseudouridine in rRNA + S-adenosyl-L-methionine = N(1)-methyl-N(3)-[(3S)-3-amino-3-carboxypropyl]pseudouridine in rRNA + S-methyl-5'-thioadenosine + H(+). Its function is as follows. Aminocarboxypropyltransferase that catalyzes the aminocarboxypropyl transfer on pseudouridine corresponding to position 914 in M.jannaschii 16S rRNA. It constitutes the last step in biosynthesis of the hypermodified N1-methyl-N3-(3-amino-3-carboxypropyl) pseudouridine (m1acp3-Psi). The protein is 16S rRNA aminocarboxypropyltransferase of Sulfurisphaera tokodaii (strain DSM 16993 / JCM 10545 / NBRC 100140 / 7) (Sulfolobus tokodaii).